A 340-amino-acid polypeptide reads, in one-letter code: tRNA N6-adenosine threonylcarbamoyltransferase (340 aa).

Positions 115 and 119 each coordinate Fe cation. Substrate is bound by residues 137-141, D170, G183, D187, and N276; that span reads IVSGG. D304 serves as a coordination point for Fe cation.

The protein belongs to the KAE1 / TsaD family. Requires Fe(2+) as cofactor.

The protein resides in the cytoplasm. The enzyme catalyses L-threonylcarbamoyladenylate + adenosine(37) in tRNA = N(6)-L-threonylcarbamoyladenosine(37) in tRNA + AMP + H(+). Its function is as follows. Required for the formation of a threonylcarbamoyl group on adenosine at position 37 (t(6)A37) in tRNAs that read codons beginning with adenine. Is involved in the transfer of the threonylcarbamoyl moiety of threonylcarbamoyl-AMP (TC-AMP) to the N6 group of A37, together with TsaE and TsaB. TsaD likely plays a direct catalytic role in this reaction. This is tRNA N6-adenosine threonylcarbamoyltransferase from Staphylococcus epidermidis (strain ATCC 35984 / DSM 28319 / BCRC 17069 / CCUG 31568 / BM 3577 / RP62A).